The chain runs to 528 residues: Nucleobase-ascorbate transporter 5 (528 aa).

The segment at 1–20 (MSAPKSGGDPLPHPPKEQLP) is disordered. Transmembrane regions (helical) follow at residues 35–55 (AVLL…LIPS), 71–91 (LIQT…VFGT), 93–113 (LPAV…IMLS), 133–153 (TQGA…SGLW), 159–179 (FLSP…LYEL), 181–201 (FPGV…LILI), 219–239 (FAVI…TLGG), 285–305 (FAMM…FIAV), 367–387 (AGFM…ASIP), 390–410 (IIAA…LSLL), 418–438 (FRTL…PQYF), and 460–479 (MVNV…AYLL).

This sequence belongs to the nucleobase:cation symporter-2 (NCS2) (TC 2.A.40) family. In terms of tissue distribution, weakly expressed in the vasculature of developing leaves.

It is found in the membrane. The protein is Nucleobase-ascorbate transporter 5 (NAT5) of Arabidopsis thaliana (Mouse-ear cress).